A 238-amino-acid polypeptide reads, in one-letter code: Ribonuclease PH (238 aa).

Phosphate contacts are provided by residues Arg-86 and 124-126; that span reads GTR.

It belongs to the RNase PH family. As to quaternary structure, homohexameric ring arranged as a trimer of dimers.

The catalysed reaction is tRNA(n+1) + phosphate = tRNA(n) + a ribonucleoside 5'-diphosphate. Its function is as follows. Phosphorolytic 3'-5' exoribonuclease that plays an important role in tRNA 3'-end maturation. Removes nucleotide residues following the 3'-CCA terminus of tRNAs; can also add nucleotides to the ends of RNA molecules by using nucleoside diphosphates as substrates, but this may not be physiologically important. Probably plays a role in initiation of 16S rRNA degradation (leading to ribosome degradation) during starvation. The chain is Ribonuclease PH from Actinobacillus pleuropneumoniae serotype 5b (strain L20).